Here is a 224-residue protein sequence, read N- to C-terminus: MVLLSKFDFSGNKIGEVEVADSLFADEGDGLQLIKDYIVAIRANKRQWSACTRNRSEVSHSTKKPFKQKGTGNARQGCLASPQFRGGGIVFGPKPKFNQHVRINRKERKAAIRLLLAQKIQTNKLTVVDDTVFVDALTAPKTQSALRFLKDCNVECRSILFIDHLDHVEKNENLRLSLRNLTAVKGFVYGININGYDLASAHNIVISKKALQELVERLVSETKD.

Residues 53–74 (RNRSEVSHSTKKPFKQKGTGNA) are disordered.

Belongs to the universal ribosomal protein uL4 family. Part of the 50S ribosomal subunit.

Functionally, one of the primary rRNA binding proteins, this protein initially binds near the 5'-end of the 23S rRNA. It is important during the early stages of 50S assembly. It makes multiple contacts with different domains of the 23S rRNA in the assembled 50S subunit and ribosome. In terms of biological role, forms part of the polypeptide exit tunnel. The sequence is that of Large ribosomal subunit protein uL4 from Chlamydia pneumoniae (Chlamydophila pneumoniae).